Consider the following 182-residue polypeptide: Probable RNA 2'-phosphotransferase (182 aa).

This sequence belongs to the KptA/TPT1 family.

Its function is as follows. Removes the 2'-phosphate from RNA via an intermediate in which the phosphate is ADP-ribosylated by NAD followed by a presumed transesterification to release the RNA and generate ADP-ribose 1''-2''-cyclic phosphate (APPR&gt;P). May function as an ADP-ribosylase. In Pseudomonas aeruginosa (strain UCBPP-PA14), this protein is Probable RNA 2'-phosphotransferase.